A 226-amino-acid polypeptide reads, in one-letter code: Ribosomal RNA small subunit methyltransferase G (226 aa).

S-adenosyl-L-methionine contacts are provided by residues Gly86, Leu91, 137-138 (VE), and Arg150.

It belongs to the methyltransferase superfamily. RNA methyltransferase RsmG family.

The protein localises to the cytoplasm. The catalysed reaction is guanosine(527) in 16S rRNA + S-adenosyl-L-methionine = N(7)-methylguanosine(527) in 16S rRNA + S-adenosyl-L-homocysteine. Its function is as follows. Specifically methylates the N7 position of guanine in position 527 of 16S rRNA. This Polaromonas sp. (strain JS666 / ATCC BAA-500) protein is Ribosomal RNA small subunit methyltransferase G.